Here is a 429-residue protein sequence, read N- to C-terminus: Enolase (429 aa).

A (2R)-2-phosphoglycerate-binding site is contributed by glutamine 162. The Proton donor role is filled by glutamate 204. Positions 241, 283, and 310 each coordinate Mg(2+). Lysine 335, arginine 364, serine 365, and lysine 386 together coordinate (2R)-2-phosphoglycerate. The active-site Proton acceptor is lysine 335.

The protein belongs to the enolase family. It depends on Mg(2+) as a cofactor.

The protein localises to the cytoplasm. The protein resides in the secreted. It is found in the cell surface. It carries out the reaction (2R)-2-phosphoglycerate = phosphoenolpyruvate + H2O. It participates in carbohydrate degradation; glycolysis; pyruvate from D-glyceraldehyde 3-phosphate: step 4/5. In terms of biological role, catalyzes the reversible conversion of 2-phosphoglycerate (2-PG) into phosphoenolpyruvate (PEP). It is essential for the degradation of carbohydrates via glycolysis. The chain is Enolase from Mycobacterium bovis (strain BCG / Pasteur 1173P2).